We begin with the raw amino-acid sequence, 142 residues long: Large ribosomal subunit protein uL11 (142 aa).

This sequence belongs to the universal ribosomal protein uL11 family. Part of the ribosomal stalk of the 50S ribosomal subunit. Interacts with L10 and the large rRNA to form the base of the stalk. L10 forms an elongated spine to which L12 dimers bind in a sequential fashion forming a multimeric L10(L12)X complex. Post-translationally, one or more lysine residues are methylated.

In terms of biological role, forms part of the ribosomal stalk which helps the ribosome interact with GTP-bound translation factors. This Rhodopseudomonas palustris (strain BisB18) protein is Large ribosomal subunit protein uL11.